A 209-amino-acid chain; its full sequence is Small ribosomal subunit protein uS5 (209 aa).

An S5 DRBM domain is found at 48-111 (LEDEVLDINM…DAAKLNITYI (64 aa)).

This sequence belongs to the universal ribosomal protein uS5 family. In terms of assembly, part of the 30S ribosomal subunit. Contacts protein S4.

Functionally, with S4 and S12 plays an important role in translational accuracy. The sequence is that of Small ribosomal subunit protein uS5 from Methanosarcina mazei (strain ATCC BAA-159 / DSM 3647 / Goe1 / Go1 / JCM 11833 / OCM 88) (Methanosarcina frisia).